The following is a 304-amino-acid chain: Homoserine kinase (304 aa).

90 to 100 is an ATP binding site; that stretch reads PLARGLGSSAS.

Belongs to the GHMP kinase family. Homoserine kinase subfamily.

The protein localises to the cytoplasm. It catalyses the reaction L-homoserine + ATP = O-phospho-L-homoserine + ADP + H(+). It participates in amino-acid biosynthesis; L-threonine biosynthesis; L-threonine from L-aspartate: step 4/5. Functionally, catalyzes the ATP-dependent phosphorylation of L-homoserine to L-homoserine phosphate. The chain is Homoserine kinase from Staphylococcus aureus (strain NCTC 8325 / PS 47).